The primary structure comprises 235 residues: Aspartate/glutamate leucyltransferase (235 aa).

This sequence belongs to the R-transferase family. Bpt subfamily.

The protein resides in the cytoplasm. It carries out the reaction N-terminal L-glutamyl-[protein] + L-leucyl-tRNA(Leu) = N-terminal L-leucyl-L-glutamyl-[protein] + tRNA(Leu) + H(+). The enzyme catalyses N-terminal L-aspartyl-[protein] + L-leucyl-tRNA(Leu) = N-terminal L-leucyl-L-aspartyl-[protein] + tRNA(Leu) + H(+). In terms of biological role, functions in the N-end rule pathway of protein degradation where it conjugates Leu from its aminoacyl-tRNA to the N-termini of proteins containing an N-terminal aspartate or glutamate. The sequence is that of Aspartate/glutamate leucyltransferase from Pseudomonas entomophila (strain L48).